A 516-amino-acid polypeptide reads, in one-letter code: Cysteine--tRNA ligase (516 aa).

Cys-32 is a binding site for Zn(2+). A 'HIGH' region motif is present at residues 34–44 (PTVYMYAHIGN). Residues Cys-230, His-255, and Glu-259 each coordinate Zn(2+). A 'KMSKS' region motif is present at residues 287-291 (KMSKS). Lys-290 serves as a coordination point for ATP.

It belongs to the class-I aminoacyl-tRNA synthetase family. As to quaternary structure, monomer. Zn(2+) serves as cofactor.

It localises to the cytoplasm. The enzyme catalyses tRNA(Cys) + L-cysteine + ATP = L-cysteinyl-tRNA(Cys) + AMP + diphosphate. This Salinibacter ruber (strain DSM 13855 / M31) protein is Cysteine--tRNA ligase.